Consider the following 398-residue polypeptide: Tryptophan synthase beta chain (398 aa).

At Lys-88 the chain carries N6-(pyridoxal phosphate)lysine.

Belongs to the TrpB family. As to quaternary structure, tetramer of two alpha and two beta chains. Pyridoxal 5'-phosphate is required as a cofactor.

The catalysed reaction is (1S,2R)-1-C-(indol-3-yl)glycerol 3-phosphate + L-serine = D-glyceraldehyde 3-phosphate + L-tryptophan + H2O. It participates in amino-acid biosynthesis; L-tryptophan biosynthesis; L-tryptophan from chorismate: step 5/5. Its function is as follows. The beta subunit is responsible for the synthesis of L-tryptophan from indole and L-serine. The polypeptide is Tryptophan synthase beta chain (Actinobacillus succinogenes (strain ATCC 55618 / DSM 22257 / CCUG 43843 / 130Z)).